We begin with the raw amino-acid sequence, 45 residues long: Movement protein p5 (45 aa).

A helical transmembrane segment spans residues I8–V28.

The protein resides in the host rough endoplasmic reticulum membrane. Transports viral genome to neighboring plant cells directly through plasmosdesmata, without any budding. The movement protein allows efficient cell to cell propagation, by bypassing the host cell wall barrier. Two movement proteins, p6, Hsp70h and three structural proteins, CP, CPm, and P64 are essential for cell-cell movement. Also plays a role in virion formation. Together with CPm and p64, encapsidates the 5'-terminal portion of the viral genome. This Grapevine leafroll-associated virus 3 (isolate United States/NY1) (GLRaV-3) protein is Movement protein p5.